The sequence spans 352 residues: MAACVPPGEAPRSASGTPTRRQVTIVRIYLDGVYGIGKSTTGRVMASAASGGSPTLYFPEPMAYWRTLFETDVISGIYDTQNRKQQGNLAVDDAALITAHYQSRFTTPYLILHDHTCTLFGGNSLQRGTQPDLTLVFDRHPVASTVCFPAARYLLGDMSMCALMAMVATLPREPQGGNIVVTTLNVEEHIRRLRTRARIGEQIDITLIATLRNVYFMLVNTCHFLRSGRVWRDGWGELPTSCGAYKHRATQMDAFQERVSPELGDTLFALFKTQELLDDRGVILEVHAWALDALMLKLRNLNVFSADLSGTPRQCAAVVESLLPLMSSTLSDFDSASALERAARTFNAEMGV.

32–39 is a binding site for ATP; sequence GVYGIGKS. Residue Glu-60 is the Proton acceptor of the active site. Substrate contacts are provided by Tyr-78, Gln-102, Phe-105, and Phe-148. Arg-192 is an ATP binding site. Arg-198 contributes to the substrate binding site.

This sequence belongs to the herpesviridae thymidine kinase family. In terms of assembly, homodimer.

It catalyses the reaction thymidine + ATP = dTMP + ADP + H(+). Functionally, catalyzes the transfer of the gamma-phospho group of ATP to thymidine to generate dTMP in the salvage pathway of pyrimidine synthesis. The dTMP serves as a substrate for DNA polymerase during viral DNA replication. Allows the virus to be reactivated and to grow in non-proliferative cells lacking a high concentration of phosphorylated nucleic acid precursors. The protein is Thymidine kinase of Equine herpesvirus 4 (strain 1942) (EHV-4).